Reading from the N-terminus, the 473-residue chain is Bifunctional protein HldE (473 aa).

Residues 1–317 are ribokinase; it reads MKLSMPRFDQ…RRAIQREEGS (317 aa). ATP is bound at residue 194-197; that stretch reads NLSE. The active site involves D263. The cytidylyltransferase stretch occupies residues 343–473; the sequence is FTNGCFDILH…TAIVEKIRKN (131 aa).

This sequence in the N-terminal section; belongs to the carbohydrate kinase PfkB family. The protein in the C-terminal section; belongs to the cytidylyltransferase family. Homodimer.

The enzyme catalyses D-glycero-beta-D-manno-heptose 7-phosphate + ATP = D-glycero-beta-D-manno-heptose 1,7-bisphosphate + ADP + H(+). It carries out the reaction D-glycero-beta-D-manno-heptose 1-phosphate + ATP + H(+) = ADP-D-glycero-beta-D-manno-heptose + diphosphate. It functions in the pathway nucleotide-sugar biosynthesis; ADP-L-glycero-beta-D-manno-heptose biosynthesis; ADP-L-glycero-beta-D-manno-heptose from D-glycero-beta-D-manno-heptose 7-phosphate: step 1/4. The protein operates within nucleotide-sugar biosynthesis; ADP-L-glycero-beta-D-manno-heptose biosynthesis; ADP-L-glycero-beta-D-manno-heptose from D-glycero-beta-D-manno-heptose 7-phosphate: step 3/4. Functionally, catalyzes the phosphorylation of D-glycero-D-manno-heptose 7-phosphate at the C-1 position to selectively form D-glycero-beta-D-manno-heptose-1,7-bisphosphate. Catalyzes the ADP transfer from ATP to D-glycero-beta-D-manno-heptose 1-phosphate, yielding ADP-D-glycero-beta-D-manno-heptose. In Pseudomonas putida (strain W619), this protein is Bifunctional protein HldE.